Here is a 245-residue protein sequence, read N- to C-terminus: Carboxymethylenebutenolidase homolog (245 aa).

Ala2 is subject to N-acetylalanine. N6-acetyllysine is present on Lys36. Residues Cys132, Asp179, and His212 contribute to the active site. Position 223 is a phosphoserine (Ser223).

The protein belongs to the dienelactone hydrolase family. As to expression, widely expressed, with highest levels in liver, followed by kidney, small intestine and colon. Present in liver and intestine (at protein level).

It is found in the cytoplasm. The protein resides in the cytosol. Strongly inhibited by p-chloromercuribenzoate (PCMB). Partially inhibited by bis-p-nitrophenylphosphate (BNPP). Not inhibited by DFP, PMSF, eserine or EDTA. Functionally, cysteine hydrolase. Can convert the prodrug olmesartan medoxomil into its pharmacologically active metabolite olmerstatan, an angiotensin receptor blocker, in liver and intestine. May also activate beta-lactam antibiotics faropenem medoxomil and lenampicillin. The protein is Carboxymethylenebutenolidase homolog (CMBL) of Homo sapiens (Human).